The sequence spans 1022 residues: Collagen alpha-1(I) chain (1022 aa).

The tract at residues Ser-1 to Pro-1022 is disordered. Residues Pro-20, Pro-23, Pro-26, Pro-35, Pro-38, Pro-41, Pro-56, Pro-71, Pro-77, Pro-86, and Pro-92 each carry the 4-hydroxyproline modification. Over residues Pro-28–Met-47 the composition is skewed to low complexity. Positions Asn-59 to Glu-73 are enriched in basic and acidic residues. 5-hydroxylysine; alternate is present on Lys-95. Lys-95 carries O-linked (Gal...) hydroxylysine; alternate glycosylation. Position 101 is a phosphoserine (Ser-101). The segment covering Asp-109–Asn-125 has biased composition (low complexity). 4-hydroxyproline is present on residues Pro-119, Pro-122, Pro-128, Pro-137, Pro-143, Pro-164, Pro-173, Pro-176, Pro-203, Pro-206, Pro-218, Pro-224, Pro-233, Pro-239, Pro-242, and Pro-257. Residues Pro-143–Ala-161 are compositionally biased toward low complexity. Over residues Pro-163–Phe-175 the composition is skewed to pro residues. The segment covering Ala-209–Pro-259 has biased composition (low complexity). The residue at position 260 (Lys-260) is a 5-hydroxylysine. Pro-266, Pro-269, Pro-281, Pro-290, Pro-305, Pro-311, Pro-320, and Pro-326 each carry 4-hydroxyproline. Gly residues predominate over residues Gly-315–Gly-324. A 5-hydroxylysine modification is found at Lys-335. 4-hydroxyproline occurs at positions 344, 353, 359, 365, 374, 377, 386, 395, 401, 413, 422, 431, 434, 452, 470, 476, 482, 488, 494, 500, 512, 521, 533, 545, 548, 554, 560, and 569. The span at Lys-368–Arg-394 shows a compositional bias: low complexity. The span at Ala-403–Pro-422 shows a compositional bias: low complexity. The span at Gln-464–Gln-491 shows a compositional bias: low complexity. A compositionally biased stretch (low complexity) spans Asn-530–Gln-557. At Lys-581 the chain carries 5-hydroxylysine. 4-hydroxyproline occurs at positions 587, 602, and 608. The span at Ser-614–Ala-628 shows a compositional bias: low complexity. At Ser-617 the chain carries Phosphoserine. A 4-hydroxyproline mark is found at Pro-629, Pro-635, Pro-638, Pro-647, Pro-653, Pro-671, Pro-680, and Pro-689. A compositionally biased stretch (low complexity) spans Ala-641–Ala-668. The segment covering Pro-670–Pro-682 has biased composition (pro residues). At Lys-692 the chain carries 5-hydroxylysine. A compositionally biased stretch (low complexity) spans Ser-697–Val-713. 2 positions are modified to 4-hydroxyproline: Pro-701 and Pro-707. A 3-hydroxyproline modification is found at Pro-715. Residues Pro-716, Pro-725, Pro-728, Pro-749, Pro-758, Pro-767, Pro-776, Pro-794, Pro-803, Pro-806, Pro-812, Pro-827, Pro-833, Pro-839, Pro-848, and Pro-854 each carry the 4-hydroxyproline modification. Over residues Glu-742 to Glu-751 the composition is skewed to low complexity. A compositionally biased stretch (low complexity) spans Thr-761–Pro-776. Over residues Pro-826 to Ala-836 the composition is skewed to pro residues. Low complexity predominate over residues Pro-838–Ser-853. Lys-863 carries the 5-hydroxylysine modification. Residues Ala-872–Val-887 are compositionally biased toward pro residues. 3 positions are modified to 4-hydroxyproline: Pro-875, Pro-878, and Pro-881. The span at Ala-908 to Pro-922 shows a compositional bias: low complexity. The span at Arg-923 to Ile-937 shows a compositional bias: basic and acidic residues. 5-hydroxylysine is present on Lys-926. Lys-938 carries the 5-hydroxylysine; alternate modification. A glycan (O-linked (Gal...) hydroxylysine; alternate) is linked at Lys-938. A 4-hydroxyproline mark is found at Pro-953, Pro-956, Pro-974, and Pro-989. Residues Pro-956–Pro-989 are compositionally biased toward low complexity. The residue at position 994 (Pro-994) is a 3-hydroxyproline. Position 995 is a 4-hydroxyproline (Pro-995). Pro residues predominate over residues Val-1007–Pro-1022. Pro-1009 is subject to 3-hydroxyproline. At Pro-1010 the chain carries 4-hydroxyproline. Position 1012 is a 3-hydroxyproline (Pro-1012). Position 1013 is a 4-hydroxyproline (Pro-1013). Residue Pro-1015 is modified to 3-hydroxyproline. Pro-1016, Pro-1019, and Pro-1022 each carry 4-hydroxyproline.

The protein belongs to the fibrillar collagen family. As to quaternary structure, trimers of one alpha 2(I) and two alpha 1(I) chains. In terms of processing, prolines at the third position of the tripeptide repeating unit (G-X-Y) are hydroxylated in some or all of the chains. As to expression, expressed in bone.

It is found in the secreted. The protein resides in the extracellular space. The protein localises to the extracellular matrix. Functionally, type I collagen is a member of group I collagen (fibrillar forming collagen). The polypeptide is Collagen alpha-1(I) chain (Mylodon darwinii (Giant ground sloth)).